Consider the following 238-residue polypeptide: 1-(5-phosphoribosyl)-5-[(5-phosphoribosylamino)methylideneamino] imidazole-4-carboxamide isomerase (238 aa).

Catalysis depends on Asp-8, which acts as the Proton acceptor. Asp-129 serves as the catalytic Proton donor.

The protein belongs to the HisA/HisF family.

The protein resides in the cytoplasm. It carries out the reaction 1-(5-phospho-beta-D-ribosyl)-5-[(5-phospho-beta-D-ribosylamino)methylideneamino]imidazole-4-carboxamide = 5-[(5-phospho-1-deoxy-D-ribulos-1-ylimino)methylamino]-1-(5-phospho-beta-D-ribosyl)imidazole-4-carboxamide. The protein operates within amino-acid biosynthesis; L-histidine biosynthesis; L-histidine from 5-phospho-alpha-D-ribose 1-diphosphate: step 4/9. In Paracoccus denitrificans (strain Pd 1222), this protein is 1-(5-phosphoribosyl)-5-[(5-phosphoribosylamino)methylideneamino] imidazole-4-carboxamide isomerase.